Consider the following 270-residue polypeptide: NADPH-dependent 7-cyano-7-deazaguanine reductase (270 aa).

A substrate-binding site is contributed by Ile-79–Ser-81. Residue Ser-81–Lys-82 participates in NADPH binding. Cys-177 serves as the catalytic Thioimide intermediate. Asp-184 (proton donor) is an active-site residue. His-216 to Glu-217 contacts substrate. Residue Arg-245–Gly-246 participates in NADPH binding.

It belongs to the GTP cyclohydrolase I family. QueF type 2 subfamily. In terms of assembly, homodimer.

Its subcellular location is the cytoplasm. The catalysed reaction is 7-aminomethyl-7-carbaguanine + 2 NADP(+) = 7-cyano-7-deazaguanine + 2 NADPH + 3 H(+). It participates in tRNA modification; tRNA-queuosine biosynthesis. Its function is as follows. Catalyzes the NADPH-dependent reduction of 7-cyano-7-deazaguanine (preQ0) to 7-aminomethyl-7-deazaguanine (preQ1). This Acinetobacter baumannii (strain SDF) protein is NADPH-dependent 7-cyano-7-deazaguanine reductase.